We begin with the raw amino-acid sequence, 787 residues long: Serine proteinase stubble (787 aa).

The segment at 1 to 22 (MKQPTLIRPRLRHRRSTPAAAT) is disordered. Residues 1–58 (MKQPTLIRPRLRHRRSTPAAATKMCPKRHWLVNNRAAGSRGSGGAAARSRRSLDQIVE) lie on the Cytoplasmic side of the membrane. The chain crosses the membrane as a helical; Signal-anchor for type II membrane protein span at residues 59–80 (VLVALIVVNCLATAAAALITPP). At 81-787 (DSLESLGSLG…FTPWILEHVR (707 aa)) the chain is on the extracellular side. N-linked (GlcNAc...) asparagine glycosylation occurs at Asn-177. A disordered region spans residues 225 to 516 (AGTLVIRPSG…EISDSSIPDA (292 aa)). Composition is skewed to low complexity over residues 262–280 (SASHPSSSSSSSSSSNPNS), 287–303 (QQQQQQQHQQNQQNHWQ), 358–368 (PSTSTSTTSTS), 393–438 (SLAA…RTTT), and 449–485 (TTATSSSSTSTTSSKTPTTTRPISSSSSSSSGIVTSS). Residues 502-512 (GIETNEISDSS) are compositionally biased toward polar residues. 2 disulfide bridges follow: Cys-532/Cys-660 and Cys-575/Cys-591. In terms of domain architecture, Peptidase S1 spans 544 to 787 (IVGGKSAAFG…FTPWILEHVR (244 aa)). Residues His-590 and Asp-640 each act as charge relay system in the active site. Asn-672 is a glycosylation site (N-linked (GlcNAc...) asparagine). Cystine bridges form between Cys-704/Cys-723 and Cys-734/Cys-763. Ser-738 serves as the catalytic Charge relay system.

This sequence belongs to the peptidase S1 family. Post-translationally, may activate itself by proteolytic cleavage.

It is found in the membrane. Its function is as follows. Hormone dependent protease required for epithelial morphogenesis, including the formation of bristles, legs, and wings. Has a dual function, detaches imaginal disk cells from extracellular matrices through its extracellular proteolytic domain and transmits an outside-to-inside signal to its intracellular domain to modify the cytoskeleton during morphogenesis. This is Serine proteinase stubble (Sb) from Drosophila melanogaster (Fruit fly).